The sequence spans 220 residues: MRLILLGAPGAGKGTQANFIKEKFGIPQISTGDMLRAAVKAGSPLGVEAKGYMDAGKLVPDALIIGLVKERLKDADCANGYLFDGFPRTIAQADAMKDAGVAIDYVLEIDVPFSEIVERMSGRRTHPASGRTYHVKFNPPKVEGKDDVTGEPLIQRDDDKEETVKKRLEVYEAQTKPLITYYGDWAKRGEENGLKAPQYRKISGLGTVDEIRERAFDALK.

An ATP-binding site is contributed by 10–15 (GAGKGT). Positions 30 to 59 (STGDMLRAAVKAGSPLGVEAKGYMDAGKLV) are NMP. Residues Thr-31, Arg-36, 57–59 (KLV), 85–88 (GFPR), and Gln-92 contribute to the AMP site. The segment at 122 to 150 (GRRTHPASGRTYHVKFNPPKVEGKDDVTG) is disordered. The interval 122–159 (GRRTHPASGRTYHVKFNPPKVEGKDDVTGEPLIQRDDD) is LID. ATP-binding positions include Arg-123 and 132–133 (TY). Positions 156 and 167 each coordinate AMP. Gly-206 lines the ATP pocket.

This sequence belongs to the adenylate kinase family. Monomer.

The protein localises to the cytoplasm. It carries out the reaction AMP + ATP = 2 ADP. It functions in the pathway purine metabolism; AMP biosynthesis via salvage pathway; AMP from ADP: step 1/1. Functionally, catalyzes the reversible transfer of the terminal phosphate group between ATP and AMP. Plays an important role in cellular energy homeostasis and in adenine nucleotide metabolism. This chain is Adenylate kinase, found in Burkholderia ambifaria (strain MC40-6).